The chain runs to 251 residues: MAVKLDPIHQFELKPLVSFGHIGHQHIAFTQSALYMFAAVGIIALITLVATRQRALVPGRMQSLAEAFYEFIASTVHQSAGHGSERFVPLVFSLFMFVLVLNLFGMIPYAFTVTSHIIVTFMLALVVILTVVIYGFMAHGVHFLDLFVPPGVPGWLKPLIVAIEVVSFISRPISLSVRLFANMLAGHIALKIFAGFVPALLAAGIWGILSPLPLALSVAITALEMLVAVLQAYVFATLTSIYLSDALHPGH.

7 helical membrane-spanning segments follow: residues 29 to 49, 56 to 73, 87 to 107, 117 to 137, 159 to 181, 192 to 212, and 218 to 238; these read FTQSALYMFAAVGIIALITLV, LVPGRMQSLAEAFYEFIA, FVPLVFSLFMFVLVLNLFGMI, IIVTFMLALVVILTVVIYGFM, LIVAIEVVSFISRPISLSVRLFA, IFAGFVPALLAAGIWGILSPL, and VAITALEMLVAVLQAYVFATL.

This sequence belongs to the ATPase A chain family. As to quaternary structure, F-type ATPases have 2 components, CF(1) - the catalytic core - and CF(0) - the membrane proton channel. CF(1) has five subunits: alpha(3), beta(3), gamma(1), delta(1), epsilon(1). CF(0) has three main subunits: a(1), b(2) and c(9-12). The alpha and beta chains form an alternating ring which encloses part of the gamma chain. CF(1) is attached to CF(0) by a central stalk formed by the gamma and epsilon chains, while a peripheral stalk is formed by the delta and b chains.

Its subcellular location is the cell inner membrane. Key component of the proton channel; it plays a direct role in the translocation of protons across the membrane. The chain is ATP synthase subunit a from Methylobacterium sp. (strain 4-46).